We begin with the raw amino-acid sequence, 267 residues long: 4-hydroxy-tetrahydrodipicolinate reductase (267 aa).

NAD(+) contacts are provided by residues 8 to 13 (GAAGRM) and Asp34. Position 35 (Arg35) interacts with NADP(+). NAD(+) is bound by residues 98–100 (GTT) and 122–125 (AANF). The Proton donor/acceptor role is filled by His155. (S)-2,3,4,5-tetrahydrodipicolinate is bound at residue His156. The active-site Proton donor is Lys159. 165-166 (GT) contributes to the (S)-2,3,4,5-tetrahydrodipicolinate binding site.

Belongs to the DapB family.

The protein resides in the cytoplasm. The catalysed reaction is (S)-2,3,4,5-tetrahydrodipicolinate + NAD(+) + H2O = (2S,4S)-4-hydroxy-2,3,4,5-tetrahydrodipicolinate + NADH + H(+). It catalyses the reaction (S)-2,3,4,5-tetrahydrodipicolinate + NADP(+) + H2O = (2S,4S)-4-hydroxy-2,3,4,5-tetrahydrodipicolinate + NADPH + H(+). It participates in amino-acid biosynthesis; L-lysine biosynthesis via DAP pathway; (S)-tetrahydrodipicolinate from L-aspartate: step 4/4. In terms of biological role, catalyzes the conversion of 4-hydroxy-tetrahydrodipicolinate (HTPA) to tetrahydrodipicolinate. The protein is 4-hydroxy-tetrahydrodipicolinate reductase of Ectopseudomonas mendocina (strain ymp) (Pseudomonas mendocina).